The sequence spans 85 residues: Large ribosomal subunit protein bL27 (85 aa).

Positions 1 to 21 (MAHKKAGGSTRNGRDSNAQRL) are disordered. The segment covering 9-19 (STRNGRDSNAQ) has biased composition (polar residues).

It belongs to the bacterial ribosomal protein bL27 family.

The polypeptide is Large ribosomal subunit protein bL27 (Pectobacterium carotovorum subsp. carotovorum (strain PC1)).